The primary structure comprises 82 residues: Delta-actitoxin-Aeq2b 1 (82 aa).

The first 19 residues, 1–19 (MNRLMILVFAAVILALASA), serve as a signal peptide directing secretion. Residues 20–26 (DEDVDIA) constitute a propeptide that is removed on maturation. Disulfide bonds link Cys32–Cys79, Cys34–Cys69, and Cys62–Cys80.

The protein belongs to the sea anemone sodium channel inhibitory toxin family. Type I subfamily.

Its subcellular location is the secreted. It localises to the nematocyst. In terms of biological role, binds specifically to voltage-gated sodium channels (Nav), thereby delaying their inactivation during signal transduction. Causes death to crabs. This chain is Delta-actitoxin-Aeq2b 1, found in Actinia equina (Beadlet anemone).